A 486-amino-acid polypeptide reads, in one-letter code: Bile acid receptor (486 aa).

K132 is covalently cross-linked (Glycyl lysine isopeptide (Lys-Gly) (interchain with G-Cter in SUMO1)). Residues 134–209 (DELCVVCGDR…MGMLAECMYT (76 aa)) constitute a DNA-binding region (nuclear receptor). Residues 137–157 (CVVCGDRASGYHYNALTCEGC) form an NR C4-type zinc finger. 2 positions are modified to phosphoserine; by PKC/PRKCA: S145 and S164. N6-acetyllysine; by EP300 is present on K167. The NR C4-type zinc finger occupies 173–197 (CKNGGNCVMDMYMRRKCQECRLRKC). K220 carries the post-translational modification N6-methyllysine; by SETD7. K227 bears the N6-acetyllysine; by EP300 mark. An NR LBD domain is found at 262–486 (DQQTLLHFIM…PLLCEIWDVQ (225 aa)). A Glycyl lysine isopeptide (Lys-Gly) (interchain with G-Cter in SUMO1) cross-link involves residue K289. Residues R345, Y375, and Y383 each coordinate chenodeoxycholate. Phosphothreonine; by PKC/PRKCZ is present on T456. H461 serves as a coordination point for chenodeoxycholate.

This sequence belongs to the nuclear hormone receptor family. NR1 subfamily. As to quaternary structure, heterodimer (via C-terminus) with RXRA (via DBD); the heterodimerization enhances the binding affinity for LXXLL motifs from coactivators. Binds DNA predominantly as a heterodimer with RXRA. After activation by agonist binding interacts with coactivators. Interacts with NCOA1, NCOA2, PPARGC1A, CARM1, SETD7, PRMT1, GPS2, SMARCA4 and MED1. Interacts with EP300 and SMARCD1. Interacts with XRCC5 and XRCC6; decreasing NR1H4/FXR transactivation activity towards ABCB11/BSEP. Interacts with PAGR1 and NCOA6; indicative for an association with an MLL2/MLL3 complex (ASCOM). In terms of processing, acetylated by EP300. Lys-227 as is the major acetylation site for EP300; the dynamicly regulated acetylation inhibits heterodimerization with RXRA and transactivation activity. Deacetylated by SIRT1. Methylation may increase transactivation of target genes. Post-translationally, phosphorylation by PKC/PRKCA increases transactivation activity by promoting association with PPARGC1A. In terms of processing, sumoylated upon ligand binding. As to expression, liver and hepatocyte-related cells express mainly FXRalpha1-type isoforms with isoform 3 and isoform 4 in approximately equal proportions. In intestine and kidney mainly FXRalpha2-type isoforms are expressed with isoform 1 and isoform 2 in approximately equal proportions. Expressed in pancreatic beta cells and macrophages.

It localises to the nucleus. Its function is as follows. Ligand-activated transcription factor. Receptor for bile acids (BAs) such as chenodeoxycholic acid (CDCA), lithocholic acid, deoxycholic acid (DCA) and allocholic acid (ACA). Plays a essential role in BA homeostasis through the regulation of genes involved in BA synthesis, conjugation and enterohepatic circulation. Also regulates lipid and glucose homeostasis and is involved innate immune response. The FXR-RXR heterodimer binds predominantly to farnesoid X receptor response elements (FXREs) containing two inverted repeats of the consensus sequence 5'-AGGTCA-3' in which the monomers are spaced by 1 nucleotide (IR-1) but also to tandem repeat DR1 sites with lower affinity, and can be activated by either FXR or RXR-specific ligands. It is proposed that monomeric nuclear receptors such as NR5A2/LRH-1 bound to coregulatory nuclear responsive element (NRE) halfsites located in close proximity to FXREs modulate transcriptional activity. In the liver activates transcription of the corepressor NR0B2 thereby indirectly inhibiting CYP7A1 and CYP8B1 (involved in BA synthesis) implicating at least in part histone demethylase KDM1A resulting in epigenomic repression, and SLC10A1/NTCP (involved in hepatic uptake of conjugated BAs). Activates transcription of the repressor MAFG (involved in regulation of BA synthesis). Activates transcription of SLC27A5/BACS and BAAT (involved in BA conjugation), ABCB11/BSEP (involved in bile salt export) by directly recruiting histone methyltransferase CARM1, and ABCC2/MRP2 (involved in secretion of conjugated BAs) and ABCB4 (involved in secretion of phosphatidylcholine in the small intestine). Activates transcription of SLC27A5/BACS and BAAT (involved in BA conjugation), ABCB11/BSEP (involved in bile salt export) by directly recruiting histone methyltransferase CARM1, and ABCC2/MRP2 (involved in secretion of conjugated BAs) and ABCB4 (involved in secretion of phosphatidylcholine in the small intestine). In the intestine activates FGF19 expression and secretion leading to hepatic CYP7A1 repression. The function also involves the coordinated induction of hepatic KLB/beta-klotho expression. Regulates transcription of liver UGT2B4 and SULT2A1 involved in BA detoxification; binding to the UGT2B4 promoter seems to imply a monomeric transactivation independent of RXRA. Modulates lipid homeostasis by activating liver NR0B2/SHP-mediated repression of SREBF1 (involved in de novo lipogenesis), expression of PLTP (involved in HDL formation), SCARB1 (involved in HDL hepatic uptake), APOE, APOC1, APOC4, PPARA (involved in beta-oxidation of fatty acids), VLDLR and SDC1 (involved in the hepatic uptake of LDL and IDL remnants), and inhibiting expression of MTTP (involved in VLDL assembly. Increases expression of APOC2 (promoting lipoprotein lipase activity implicated in triglyceride clearance). Transrepresses APOA1 involving a monomeric competition with NR2A1 for binding to a DR1 element. Also reduces triglyceride clearance by inhibiting expression of ANGPTL3 and APOC3 (both involved in inhibition of lipoprotein lipase). Involved in glucose homeostasis by modulating hepatic gluconeogenesis through activation of NR0B2/SHP-mediated repression of respective genes. Modulates glycogen synthesis (inducing phosphorylation of glycogen synthase kinase-3). Modulates glucose-stimulated insulin secretion and is involved in insulin resistance. Involved in intestinal innate immunity. Plays a role in protecting the distal small intestine against bacterial overgrowth and preservation of the epithelial barrier. Down-regulates inflammatory cytokine expression in several types of immune cells including macrophages and mononuclear cells. Mediates trans-repression of TLR4-induced cytokine expression; the function seems to require its sumoylation and prevents N-CoR nuclear receptor corepressor clearance from target genes such as IL1B and NOS2. Involved in the TLR9-mediated protective mechanism in intestinal inflammation. Plays an anti-inflammatory role in liver inflammation; proposed to inhibit pro-inflammatory (but not antiapoptotic) NF-kappa-B signaling). Functionally, promotes transcriptional activation of target genes NR0B2/SHP (inducible by unconjugated CDCA), SLC51B/OSTB (inducible by unconjugated CDCA and DCA) and FABP6/IBAP; low activity for ABCB11/BSEP (inducible by unconjugated CDCA, DCA and ACA); not inducible by taurine- and glycine-amidated CDCA. In terms of biological role, promotes transcriptional activation of target genes ABCB11/BSEP (inducible by unconjugated CDCA, DCA and ACA), NR0B2/SHP (inducible by unconjugated CDCA DCA and ACA), SLC51B/OSTB (inducible by unconjugated CDCA and DCA) and FABP6/IBAP; not inducible by taurine- and glycine-amidated CDCA. Promotes transcriptional activation of target genes NR0B2/SHP (inducible by unconjugated CDCA), SLC51B/OSTB (inducible by unconjugated CDCA and DCA) and IBAP; low activity for ABCB11/BSEP (inducible by unconjugated CDCA, DCA and ACA); not inducible by taurine- and glycine-amidated CDCA. Its function is as follows. Promotes transcriptional activation of target genes ABCB11/BSEP (inducible by unconjugated CDCA, ACA and DCA), NR0B2/SHP (inducible by unconjugated CDCA, ACA and DCA), SLC51B/OSTB (inducible by unconjugated CDCA and DCA) and FABP6/IBAP; most efficient isoform compared to isoforms 1 to 3; not inducible by taurine- and glycine-amidated CDCA. In Homo sapiens (Human), this protein is Bile acid receptor (NR1H4).